The chain runs to 397 residues: Enoyl-[acyl-carrier-protein] reductase [NADH] (397 aa).

Residues 48–53 (GASTGY), 74–75 (FE), 111–112 (DA), and 139–140 (LA) contribute to the NAD(+) site. Tyrosine 224 is a substrate binding site. Tyrosine 234 acts as the Proton donor in catalysis. NAD(+) is bound by residues lysine 243 and 272-274 (VVT).

It belongs to the TER reductase family. In terms of assembly, monomer.

It carries out the reaction a 2,3-saturated acyl-[ACP] + NAD(+) = a (2E)-enoyl-[ACP] + NADH + H(+). The protein operates within lipid metabolism; fatty acid biosynthesis. In terms of biological role, involved in the final reduction of the elongation cycle of fatty acid synthesis (FAS II). Catalyzes the reduction of a carbon-carbon double bond in an enoyl moiety that is covalently linked to an acyl carrier protein (ACP). The polypeptide is Enoyl-[acyl-carrier-protein] reductase [NADH] (Pseudomonas fluorescens (strain SBW25)).